Reading from the N-terminus, the 314-residue chain is Hydrolase 4 (314 aa).

The Involved in the stabilization of the negatively charged intermediate by the formation of the oxyanion hole signature appears at 73 to 75; the sequence is HGA. Residues S165 and D260 contribute to the active site.

Belongs to the 'GDXG' lipolytic enzyme family.

It functions in the pathway alkaloid biosynthesis. Its function is as follows. Component of the seco-iridoid and derivatives monoterpenoid indole alkaloids (MIAs, e.g. vincadifformine) biosynthesis pathway. Catalyzes the conversion of O-acetylstemmadenine (OAS) to vincadifformine. May also trigger the formation of additional unknown MIAs. This chain is Hydrolase 4, found in Catharanthus roseus (Madagascar periwinkle).